The sequence spans 352 residues: Anthranilate phosphoribosyltransferase (352 aa).

5-phospho-alpha-D-ribose 1-diphosphate is bound by residues G94, 97–98 (GS), S102, 104–107 (NIST), 122–130 (KHGNRAVSS), and S134. G94 contributes to the anthranilate binding site. Mg(2+) is bound at residue S106. Position 125 (N125) interacts with anthranilate. R180 provides a ligand contact to anthranilate. D239 and E240 together coordinate Mg(2+).

The protein belongs to the anthranilate phosphoribosyltransferase family. As to quaternary structure, homodimer. Mg(2+) is required as a cofactor.

The catalysed reaction is N-(5-phospho-beta-D-ribosyl)anthranilate + diphosphate = 5-phospho-alpha-D-ribose 1-diphosphate + anthranilate. Its pathway is amino-acid biosynthesis; L-tryptophan biosynthesis; L-tryptophan from chorismate: step 2/5. Catalyzes the transfer of the phosphoribosyl group of 5-phosphorylribose-1-pyrophosphate (PRPP) to anthranilate to yield N-(5'-phosphoribosyl)-anthranilate (PRA). This is Anthranilate phosphoribosyltransferase from Citrifermentans bemidjiense (strain ATCC BAA-1014 / DSM 16622 / JCM 12645 / Bem) (Geobacter bemidjiensis).